A 142-amino-acid polypeptide reads, in one-letter code: Hemoglobin subunit alpha-1 (142 aa).

The residue at position 1 (S1) is an N-acetylserine. The Globin domain occupies 1–142; sequence SLSVKDKAAV…VALALAERYR (142 aa). H59 contacts O2. A heme b-binding site is contributed by H88.

The protein belongs to the globin family. As to quaternary structure, hb 1 is a heterotetramer of two alpha-1 and two beta-1 chains. In terms of tissue distribution, red blood cells.

Functionally, involved in oxygen transport from gills to the various peripheral tissues. In Gobionotothen gibberifrons (Humped rockcod), this protein is Hemoglobin subunit alpha-1 (hba1).